The following is a 101-amino-acid chain: Small ribosomal subunit protein bS18c (101 aa).

Basic residues predominate over residues 1 to 19 (MDKSKRPFRKSKRSFRRRL). Positions 1 to 23 (MDKSKRPFRKSKRSFRRRLPPIG) are disordered.

It belongs to the bacterial ribosomal protein bS18 family. In terms of assembly, part of the 30S ribosomal subunit.

The protein resides in the plastid. Its subcellular location is the chloroplast. The chain is Small ribosomal subunit protein bS18c from Ceratophyllum demersum (Rigid hornwort).